Here is a 141-residue protein sequence, read N- to C-terminus: Large ribosomal subunit protein uL11 (141 aa).

This sequence belongs to the universal ribosomal protein uL11 family. In terms of assembly, part of the ribosomal stalk of the 50S ribosomal subunit. Interacts with L10 and the large rRNA to form the base of the stalk. L10 forms an elongated spine to which L12 dimers bind in a sequential fashion forming a multimeric L10(L12)X complex. Post-translationally, one or more lysine residues are methylated.

Its function is as follows. Forms part of the ribosomal stalk which helps the ribosome interact with GTP-bound translation factors. This is Large ribosomal subunit protein uL11 from Gloeobacter violaceus (strain ATCC 29082 / PCC 7421).